The sequence spans 481 residues: UDP-glucose 6-dehydrogenase 1 (481 aa).

Residues 8-13 (GAGYVG), Asp33, Arg38, 86-90 (VNTPT), 127-128 (ST), and Glu161 each bind NAD(+). Residues 157–161 (EFLAE), 216–223 (KLAANAFL), and 256–269 (RIGP…VGFG) contribute to the substrate site. Catalysis depends on Cys272, which acts as the Nucleophile. 272–275 (CFQK) is an NAD(+) binding site. 334–335 (FK) is a binding site for substrate. Arg342 is a binding site for NAD(+). Position 448 (Arg448) interacts with substrate.

This sequence belongs to the UDP-glucose/GDP-mannose dehydrogenase family.

The catalysed reaction is UDP-alpha-D-glucose + 2 NAD(+) + H2O = UDP-alpha-D-glucuronate + 2 NADH + 3 H(+). It participates in nucleotide-sugar biosynthesis; UDP-alpha-D-glucuronate biosynthesis; UDP-alpha-D-glucuronate from UDP-alpha-D-glucose: step 1/1. Inhibited by UDP-xylose. In terms of biological role, involved in the biosynthesis of UDP-glucuronic acid (UDP-GlcA), providing nucleotide sugars for cell-wall polymers. The chain is UDP-glucose 6-dehydrogenase 1 (UGD1) from Arabidopsis thaliana (Mouse-ear cress).